The chain runs to 212 residues: Interleukin-6 (212 aa).

The N-terminal stretch at 1 to 27 (MNSFSTSAFGPVAFSLGLLLVLPAAFP) is a signal peptide. Cysteines 72 and 78 form a disulfide. Asn73 is a glycosylation site (N-linked (GlcNAc...) asparagine). Ser81 is subject to Phosphoserine. A disulfide bond links Cys101 and Cys111. Asn172 is a glycosylation site (N-linked (GlcNAc...) asparagine).

Belongs to the IL-6 superfamily. As to quaternary structure, component of a hexamer of two molecules each of IL6, IL6R and IL6ST; first binds to IL6R to associate with the signaling subunit IL6ST. Interacts with IL6R (via the N-terminal ectodomain); this interaction may be affected by IL6R-binding with SORL1, hence decreasing IL6 cis signaling. Interacts with SORL1 (via the N-terminal ectodomain); this interaction leads to IL6 internalization and lysosomal degradation. May form a trimeric complex with the soluble SORL1 ectodomain and soluble IL6R receptor; this interaction might stabilize circulating IL6, hence promoting IL6 trans signaling.

The protein localises to the secreted. Functionally, cytokine with a wide variety of biological functions in immunity, tissue regeneration, and metabolism. Binds to IL6R, then the complex associates to the signaling subunit IL6ST/gp130 to trigger the intracellular IL6-signaling pathway. The interaction with the membrane-bound IL6R and IL6ST stimulates 'classic signaling', whereas the binding of IL6 and soluble IL6R to IL6ST stimulates 'trans-signaling'. Alternatively, 'cluster signaling' occurs when membrane-bound IL6:IL6R complexes on transmitter cells activate IL6ST receptors on neighboring receiver cells. In terms of biological role, IL6 is a potent inducer of the acute phase response. Rapid production of IL6 contributes to host defense during infection and tissue injury, but excessive IL6 synthesis is involved in disease pathology. In the innate immune response, is synthesized by myeloid cells, such as macrophages and dendritic cells, upon recognition of pathogens through toll-like receptors (TLRs) at the site of infection or tissue injury. In the adaptive immune response, is required for the differentiation of B cells into immunoglobulin-secreting cells. Plays a major role in the differentiation of CD4(+) T cell subsets. Essential factor for the development of T follicular helper (Tfh) cells that are required for the induction of germinal-center formation. Required to drive naive CD4(+) T cells to the Th17 lineage. Also required for proliferation of myeloma cells and the survival of plasmablast cells. Its function is as follows. Acts as an essential factor in bone homeostasis and on vessels directly or indirectly by induction of VEGF, resulting in increased angiogenesis activity and vascular permeability. Induces, through 'trans-signaling' and synergistically with IL1B and TNF, the production of VEGF. Involved in metabolic controls, is discharged into the bloodstream after muscle contraction increasing lipolysis and improving insulin resistance. 'Trans-signaling' in central nervous system also regulates energy and glucose homeostasis. Mediates, through GLP-1, crosstalk between insulin-sensitive tissues, intestinal L cells and pancreatic islets to adapt to changes in insulin demand. Also acts as a myokine. Plays a protective role during liver injury, being required for maintenance of tissue regeneration. Also has a pivotal role in iron metabolism by regulating HAMP/hepcidin expression upon inflammation or bacterial infection. Through activation of IL6ST-YAP-NOTCH pathway, induces inflammation-induced epithelial regeneration. This Macaca mulatta (Rhesus macaque) protein is Interleukin-6 (IL6).